The following is a 193-amino-acid chain: Transcriptional repressor NrdR (193 aa).

The segment at 3–34 (CPYCGGLDTQVKDSRPSEDASAIRRRRICPDC) is a zinc-finger region. In terms of domain architecture, ATP-cone spans 49–139 (LTVVKRSGRK…VYKNFREAKD (91 aa)). The segment at 150–193 (DQQDGAVPQAEADRPIGAGPPSEAAQPAAGEGGDAPMRRARSRA) is disordered.

Belongs to the NrdR family. The cofactor is Zn(2+).

Functionally, negatively regulates transcription of bacterial ribonucleotide reductase nrd genes and operons by binding to NrdR-boxes. This is Transcriptional repressor NrdR from Methylobacterium nodulans (strain LMG 21967 / CNCM I-2342 / ORS 2060).